Reading from the N-terminus, the 59-residue chain is Protein translocase subunit SecE (59 aa).

A helical membrane pass occupies residues 37–57; sequence LIVLLFVGLLAFLVQLAFSIL.

The protein belongs to the SecE/SEC61-gamma family. Component of the Sec protein translocase complex. Heterotrimer consisting of SecY (alpha), SecG (beta) and SecE (gamma) subunits. The heterotrimers can form oligomers, although 1 heterotrimer is thought to be able to translocate proteins. Interacts with the ribosome. May interact with SecDF, and other proteins may be involved.

It is found in the cell membrane. Its function is as follows. Essential subunit of the Sec protein translocation channel SecYEG. Clamps together the 2 halves of SecY. May contact the channel plug during translocation. The polypeptide is Protein translocase subunit SecE (Metallosphaera sedula (strain ATCC 51363 / DSM 5348 / JCM 9185 / NBRC 15509 / TH2)).